Reading from the N-terminus, the 216-residue chain is Phosphoserine phosphatase (216 aa).

Catalysis depends on D10, which acts as the Nucleophile. 2 residues coordinate Mg(2+): D10 and D12. The active-site Proton donor is the D12. Residues E19, R55, 98 to 99 (SG), and K143 contribute to the substrate site. Position 166 (D166) interacts with Mg(2+). Position 169 (N169) interacts with substrate.

Belongs to the HAD-like hydrolase superfamily. SerB family. Mg(2+) serves as cofactor.

The enzyme catalyses O-phospho-L-serine + H2O = L-serine + phosphate. It carries out the reaction O-phospho-D-serine + H2O = D-serine + phosphate. The protein operates within amino-acid biosynthesis; L-serine biosynthesis; L-serine from 3-phospho-D-glycerate: step 3/3. The sequence is that of Phosphoserine phosphatase from Lactococcus lactis subsp. lactis (strain IL1403) (Streptococcus lactis).